The sequence spans 429 residues: Adenylosuccinate synthetase (429 aa).

GTP contacts are provided by residues 13–19 and 41–43; these read GDEGKGK and GHT. Catalysis depends on Asp14, which acts as the Proton acceptor. The Mg(2+) site is built by Asp14 and Gly41. IMP contacts are provided by residues 14 to 17, 39 to 42, Thr130, Arg144, Gln225, Thr240, and Arg304; these read DEGK and NAGH. The active-site Proton donor is the His42. 300 to 306 serves as a coordination point for substrate; sequence ATTGRAR. Residues Arg306, 332–334, and 413–415 each bind GTP; these read KLD and STG.

This sequence belongs to the adenylosuccinate synthetase family. Homodimer. The cofactor is Mg(2+).

The protein localises to the cytoplasm. The enzyme catalyses IMP + L-aspartate + GTP = N(6)-(1,2-dicarboxyethyl)-AMP + GDP + phosphate + 2 H(+). The protein operates within purine metabolism; AMP biosynthesis via de novo pathway; AMP from IMP: step 1/2. Its function is as follows. Plays an important role in the de novo pathway of purine nucleotide biosynthesis. Catalyzes the first committed step in the biosynthesis of AMP from IMP. This is Adenylosuccinate synthetase from Pseudomonas fluorescens (strain SBW25).